Consider the following 447-residue polypeptide: Phosphoglucosamine mutase (447 aa).

Catalysis depends on S100, which acts as the Phosphoserine intermediate. Mg(2+) contacts are provided by S100, D239, D241, and D243. At S100 the chain carries Phosphoserine.

This sequence belongs to the phosphohexose mutase family. Mg(2+) is required as a cofactor. Activated by phosphorylation.

It carries out the reaction alpha-D-glucosamine 1-phosphate = D-glucosamine 6-phosphate. In terms of biological role, catalyzes the conversion of glucosamine-6-phosphate to glucosamine-1-phosphate. The sequence is that of Phosphoglucosamine mutase from Thermoanaerobacter sp. (strain X514).